Consider the following 178-residue polypeptide: Photosystem II extrinsic protein V (178 aa).

The first 38 residues, 1–38, serve as a signal peptide directing secretion; sequence MFSKFFSLQKAFAAARRRLLILILVLGMAGYAWGPALA. 4 residues coordinate heme c: Cys-71, Cys-74, His-75, and His-126.

Belongs to the cytochrome c family. PsbV subfamily. In terms of assembly, PSII is composed of 1 copy each of membrane proteins PsbA, PsbB, PsbC, PsbD, PsbE, PsbF, PsbH, PsbI, PsbJ, PsbK, PsbL, PsbM, PsbT, PsbX, PsbY, PsbZ, Psb30/Ycf12, peripheral proteins PsbO, CyanoQ (PsbQ), PsbU, PsbV and a large number of cofactors. It forms dimeric complexes. The cofactor is heme c.

Its subcellular location is the cellular thylakoid membrane. In terms of biological role, one of the extrinsic, lumenal subunits of photosystem II (PSII). PSII is a light-driven water plastoquinone oxidoreductase, using light energy to abstract electrons from H(2)O, generating a proton gradient subsequently used for ATP formation. The extrinsic proteins stabilize the structure of photosystem II oxygen-evolving complex (OEC), the ion environment of oxygen evolution and protect the OEC against heat-induced inactivation. Low-potential cytochrome c that plays a role in the OEC of PSII. The polypeptide is Photosystem II extrinsic protein V (Synechococcus sp. (strain JA-3-3Ab) (Cyanobacteria bacterium Yellowstone A-Prime)).